We begin with the raw amino-acid sequence, 162 residues long: Class I hydrophobin 3 (162 aa).

Intrachain disulfides connect Cys-36/Cys-150 and Cys-151/Cys-159.

It belongs to the fungal hydrophobin family. Self-assembles to form functional amyloid fibrils called rodlets. Self-assembly into fibrillar rodlets occurs spontaneously at hydrophobic:hydrophilic interfaces and the rodlets further associate laterally to form amphipathic monolayers.

The protein localises to the secreted. It localises to the cell wall. Functionally, aerial growth, conidiation, and dispersal of filamentous fungi in the environment rely upon a capability of their secreting small amphipathic proteins called hydrophobins (HPBs) with low sequence identity. Class I can self-assemble into an outermost layer of rodlet bundles on aerial cell surfaces, conferring cellular hydrophobicity that supports fungal growth, development and dispersal; whereas Class II form highly ordered films at water-air interfaces through intermolecular interactions but contribute nothing to the rodlet structure. The chain is Class I hydrophobin 3 from Coprinopsis cinerea (strain Okayama-7 / 130 / ATCC MYA-4618 / FGSC 9003) (Inky cap fungus).